Consider the following 232-residue polypeptide: Enolase-phosphatase E1 (232 aa).

The protein belongs to the HAD-like hydrolase superfamily. MasA/MtnC family. In terms of assembly, monomer. The cofactor is Mg(2+).

The catalysed reaction is 5-methylsulfanyl-2,3-dioxopentyl phosphate + H2O = 1,2-dihydroxy-5-(methylsulfanyl)pent-1-en-3-one + phosphate. It functions in the pathway amino-acid biosynthesis; L-methionine biosynthesis via salvage pathway; L-methionine from S-methyl-5-thio-alpha-D-ribose 1-phosphate: step 3/6. The protein operates within amino-acid biosynthesis; L-methionine biosynthesis via salvage pathway; L-methionine from S-methyl-5-thio-alpha-D-ribose 1-phosphate: step 4/6. Its function is as follows. Bifunctional enzyme that catalyzes the enolization of 2,3-diketo-5-methylthiopentyl-1-phosphate (DK-MTP-1-P) into the intermediate 2-hydroxy-3-keto-5-methylthiopentenyl-1-phosphate (HK-MTPenyl-1-P), which is then dephosphorylated to form the acireductone 1,2-dihydroxy-3-keto-5-methylthiopentene (DHK-MTPene). This is Enolase-phosphatase E1 from Sorangium cellulosum (strain So ce56) (Polyangium cellulosum (strain So ce56)).